The primary structure comprises 393 residues: Putative 8-amino-7-oxononanoate synthase (393 aa).

R23 contributes to the substrate binding site. Pyridoxal 5'-phosphate is bound at residue 110 to 111 (GY). Substrate is bound at residue H135. Residues S183, 208-211 (DEAH), and 239-242 (TLSK) contribute to the pyridoxal 5'-phosphate site. N6-(pyridoxal phosphate)lysine is present on K242. Position 362 (T362) interacts with substrate.

Belongs to the class-II pyridoxal-phosphate-dependent aminotransferase family. BioF subfamily. In terms of assembly, homodimer. Pyridoxal 5'-phosphate serves as cofactor.

The enzyme catalyses 6-carboxyhexanoyl-[ACP] + L-alanine + H(+) = (8S)-8-amino-7-oxononanoate + holo-[ACP] + CO2. It participates in cofactor biosynthesis; biotin biosynthesis. Functionally, catalyzes the decarboxylative condensation of pimeloyl-[acyl-carrier protein] and L-alanine to produce 8-amino-7-oxononanoate (AON), [acyl-carrier protein], and carbon dioxide. This chain is Putative 8-amino-7-oxononanoate synthase (bioF), found in Trichodesmium erythraeum (strain IMS101).